A 445-amino-acid chain; its full sequence is Maltoporin (445 aa).

Positions 1-25 (MKMKAKWLPIAAGVTAALASQAAFA) are cleaved as a signal peptide.

Belongs to the porin LamB (TC 1.B.3) family. As to quaternary structure, homotrimer formed of three 18-stranded antiparallel beta-barrels, containing three independent channels.

The protein localises to the cell outer membrane. The catalysed reaction is beta-maltose(in) = beta-maltose(out). Its function is as follows. Involved in the transport of maltose and maltodextrins. The chain is Maltoporin from Aeromonas salmonicida.